The chain runs to 1551 residues: Serine/threonine-protein kinase MRCK gamma (1551 aa).

Positions 71 to 337 (FEILKVIGRG…LDDFRKHPFF (267 aa)) constitute a Protein kinase domain. ATP contacts are provided by residues 77-85 (IGRGAFGEV) and lysine 100. Catalysis depends on aspartate 195, which acts as the Proton acceptor. 2 positions are modified to phosphoserine; by autocatalysis: serine 216 and serine 228. Position 234 is a phosphothreonine; by autocatalysis (threonine 234). The AGC-kinase C-terminal domain maps to 338–408 (EGVDWERLAT…TSGSPFDVQS (71 aa)). Coiled coils occupy residues 442-675 (QPQE…TESN) and 729-801 (KARR…QARG). The tract at residues 578 to 605 (QESSQAKTVHAAPETNGIGSPEGQSQEA) is disordered. Residues 820–886 (TEKDSAKDPG…SHTLRPRSFP (67 aa)) are disordered. A compositionally biased stretch (basic and acidic residues) spans 839-849 (AEAELRPEGRR). Residues 877-926 (SHTLRPRSFPSPTKCLRCTSLMLGLGRQGLGCDTCGYFCHSACASQAPPC) form a Phorbol-ester/DAG-type zinc finger. One can recognise a PH domain in the interval 946-1065 (GTAYEGFLSV…WLQVLGELQR (120 aa)). Residues 1091-1365 (LPHALCAAVI…RPLNPEGSLF (275 aa)) form the CNH domain. A CRIB domain is found at 1436-1449 (ISPPTNFNHLVHVG). The segment at 1441–1551 (NFNHLVHVGP…PPDPESESSP (111 aa)) is disordered. Positions 1455-1468 (PNTRDGTRAQEQKS) are enriched in basic and acidic residues. Serine 1481 is subject to Phosphoserine. Residues 1511-1527 (TSLSSESVSCPQGSLSP) are compositionally biased toward polar residues.

Belongs to the protein kinase superfamily. AGC Ser/Thr protein kinase family. DMPK subfamily. Homodimer and homotetramer via the coiled coil regions. Interacts tightly with GTP-bound but not GDP-bound CDC42. It depends on Mg(2+) as a cofactor.

It is found in the cytoplasm. The enzyme catalyses L-seryl-[protein] + ATP = O-phospho-L-seryl-[protein] + ADP + H(+). It carries out the reaction L-threonyl-[protein] + ATP = O-phospho-L-threonyl-[protein] + ADP + H(+). With respect to regulation, maintained in an inactive, closed conformation by an interaction between the kinase domain and the negative autoregulatory C-terminal coiled-coil region. Agonist binding to the phorbol ester binding site disrupts this, releasing the kinase domain to allow N-terminus-mediated dimerization and kinase activation by transautophosphorylation. Functionally, may act as a downstream effector of CDC42 in cytoskeletal reorganization. Contributes to the actomyosin contractility required for cell invasion, through the regulation of MYPT1 and thus MLC2 phosphorylation. This Mus musculus (Mouse) protein is Serine/threonine-protein kinase MRCK gamma.